The primary structure comprises 423 residues: GTPase HflX (423 aa).

The Hflx-type G domain maps to 202–366 (PAAAIVGYTN…LLETILRNQK (165 aa)). Residues 208 to 215 (GYTNAGKS), 233 to 237 (FATLD), 255 to 258 (DTVG), 321 to 324 (NKID), and 344 to 346 (SAK) each bind GTP. Residues serine 215 and threonine 235 each contribute to the Mg(2+) site.

The protein belongs to the TRAFAC class OBG-HflX-like GTPase superfamily. HflX GTPase family. Monomer. Associates with the 50S ribosomal subunit. It depends on Mg(2+) as a cofactor.

The protein localises to the cytoplasm. Its function is as follows. GTPase that associates with the 50S ribosomal subunit and may have a role during protein synthesis or ribosome biogenesis. The protein is GTPase HflX of Lacrimispora saccharolytica (strain ATCC 35040 / DSM 2544 / NRCC 2533 / WM1) (Clostridium saccharolyticum).